The primary structure comprises 535 residues: GMP synthase [glutamine-hydrolyzing] (535 aa).

The region spanning 20 to 210 (PVLVVDFGAQ…LHRCAALPND (191 aa)) is the Glutamine amidotransferase type-1 domain. The active-site Nucleophile is the Cys97. Active-site residues include His184 and Glu186. Residues 211 to 409 (WDASSIIEDQ…LGLPDEIVWR (199 aa)) enclose the GMPS ATP-PPase domain. An ATP-binding site is contributed by 238 to 244 (SGGVDSA).

In terms of assembly, homodimer.

It catalyses the reaction XMP + L-glutamine + ATP + H2O = GMP + L-glutamate + AMP + diphosphate + 2 H(+). It functions in the pathway purine metabolism; GMP biosynthesis; GMP from XMP (L-Gln route): step 1/1. Functionally, catalyzes the synthesis of GMP from XMP. The protein is GMP synthase [glutamine-hydrolyzing] of Bifidobacterium longum (strain NCC 2705).